Consider the following 485-residue polypeptide: Forkhead box protein N3 (485 aa).

2 disordered regions span residues 1–54 (MGPV…KGGM) and 85–108 (PVQD…DAKQ). The segment covering 16-30 (ISVSSQCYRSSTLSN) has biased composition (polar residues). Positions 113 to 209 (KPPYSFSCLI…QALKKTPYHP (97 aa)) form a DNA-binding region, fork-head. Disordered regions lie at residues 316 to 357 (MESE…ISSS) and 401 to 449 (PLVE…MKEA). The span at 338–357 (SSAKSANKRSSSPSDSISSS) shows a compositional bias: low complexity. Positions 410–422 (QHKKKQHLLKLRR) are enriched in basic residues.

As to expression, at early cleavage stages, localized within the animal half of the embryo. At gastrulation, expression expands over the whole embryo excluding the future endodermal cells of the blastopore. During neurulation, expressed in the prospective eye field and in the neural crest cells. Strongly enriched in the eye vesicles at stage 26. From stage 29 onwards, expressed predominantly in the eye, the branchial arches and the vagal ganglion. At stage 38, expressed throughout the head with strongest expression in the head mesenchyme and the eye lens.

The protein resides in the nucleus. Its function is as follows. Acts as a transcriptional repressor. May be involved in DNA damage-inducible cell cycle arrests (checkpoints). In Xenopus laevis (African clawed frog), this protein is Forkhead box protein N3.